A 379-amino-acid polypeptide reads, in one-letter code: RIB43A-like with coiled-coils protein 1 (379 aa).

Coiled coils occupy residues 43–111 (EALN…RCEL) and 285–337 (IRKV…EFRR).

It belongs to the RIB43A family. Microtubule inner protein component of sperm flagellar doublet microtubules.

The protein localises to the cytoplasm. It localises to the cytoskeleton. It is found in the flagellum axoneme. This chain is RIB43A-like with coiled-coils protein 1 (RIBC1), found in Bos taurus (Bovine).